Consider the following 185-residue polypeptide: Neuronal vesicle trafficking-associated protein 1 (185 aa).

At 1-82 the chain is on the cytoplasmic side; sequence MVKLGNNFAE…ITEGVTERFK (82 aa). The helical; Signal-anchor for type II membrane protein transmembrane segment at 83–103 threads the bilayer; the sequence is VSVLVLFALAFLTCVVFLVVY. Residues 104–185 lie on the Lumenal side of the membrane; sequence KVYKYDRACP…QETEAAEKSA (82 aa). Residues 129-164 form a required for GRIP1 interaction region; it reads ESYYTEQDSSAREKFYTVINHYNVAKQSITRSVSPW.

The protein belongs to the NSG family. As to quaternary structure, forms a complex with GRIP1, GRIA2 and STX12 through direct interaction with GRIP1; controls the intracellular fate of AMPAR and the endosomal sorting of the GRIA2 subunit toward recycling and membrane targeting. Interacts with STX12. Interacts with APP; could regulate APP processing. Interacts with FAM171A1. Pituitary and less in adrenal gland and testis. Expressed in the hippocampus throughout development. At P0, highly and broadly expressed throughout the cortical plate, but is down-regulated overall at P8 and P14, but remains relatively enriched in layer V. At P0 is expressed ubiquitously in the developing cerebellum namely Purkinje neurons as well as granule neurons. However, it becomes restricted to Purkinje cells by P8. This exclusive expression in Purkinje cells is maintained throughout adulthood.

It localises to the membrane. The protein localises to the golgi apparatus. It is found in the trans-Golgi network membrane. The protein resides in the endosome membrane. Its subcellular location is the cell projection. It localises to the dendrite. The protein localises to the early endosome membrane. It is found in the late endosome membrane. The protein resides in the lysosome lumen. Its subcellular location is the recycling endosome membrane. It localises to the cytoplasmic vesicle membrane. The protein localises to the golgi stack membrane. It is found in the endosome. The protein resides in the multivesicular body membrane. Its subcellular location is the endoplasmic reticulum membrane. Its function is as follows. Plays a role in the recycling mechanism in neurons of multiple receptors, including AMPAR, APP and L1CAM and acts at the level of early endosomes to promote sorting of receptors toward a recycling pathway. Regulates sorting and recycling of GRIA2 through interaction with GRIP1 and then contributes to the regulation of synaptic transmission and plasticity by affecting the recycling and targeting of AMPA receptors to the synapse. Is required for faithful sorting of L1CAM to axons by facilitating trafficking from somatodendritic early endosome or the recycling endosome. In an other hand, induces apoptosis via the activation of CASP3 in response to DNA damage. The sequence is that of Neuronal vesicle trafficking-associated protein 1 from Mus musculus (Mouse).